Here is a 258-residue protein sequence, read N- to C-terminus: Aquaglyceroporin (258 aa).

Residues 1-11 (MHMLFYKSYVR) lie on the Cytoplasmic side of the membrane. A helical membrane pass occupies residues 12 to 32 (EFIGEFLGTFVLMFLGEGATA). The Extracellular segment spans residues 33 to 45 (NFHTTGLSGDWYK). A helical membrane pass occupies residues 46–66 (LCLGWGLAVFFGILVSAKLSG). Residues glycine 66, alanine 67, and asparagine 70 each contribute to the glycerol site. The Cytoplasmic segment spans residues 67–87 (AHLNLAVSIGLSSINKFDLKK). Residues 88–108 (IPVYFFAQLLGAFVGTSTVYG) traverse the membrane as a helical segment. The Extracellular segment spans residues 109–135 (LYHGFISNSKIPQFAWETSRNPSISLT). Residue serine 127 coordinates glycerol. The chain crosses the membrane as a helical span at residues 136–156 (GAFFNELILTGILLLVILVVV). Topologically, residues 157 to 171 (DENICGKFHILKLSS) are cytoplasmic. A helical transmembrane segment spans residues 172-192 (VVGLIILCIGITFGGNTGFAL). Glycine 189, phenylalanine 190, asparagine 193, and arginine 196 together coordinate glycerol. Residues 193–217 (NPSRDLGSRFLSLIAYGKDTFTKDN) are Extracellular-facing. The helical transmembrane segment at 218 to 238 (FYFWVPLVAPCVGSVVFCQFY) threads the bilayer. Residues 239–258 (DKVICPLVDLANNEKDGVDL) lie on the Cytoplasmic side of the membrane.

Belongs to the MIP/aquaporin (TC 1.A.8) family. Homotetramer.

It is found in the cell membrane. The catalysed reaction is H2O(in) = H2O(out). It catalyses the reaction glycerol(in) = glycerol(out). It carries out the reaction urea(in) = urea(out). The enzyme catalyses NH4(+)(in) = NH4(+)(out). The catalysed reaction is methylamine(out) = methylamine(in). It catalyses the reaction formamide(out) = formamide(in). Functionally, mediates water and glycerol transport across the cell membrane. Permeable to sugar alcohols of up to five carbons and urea. Permeable to ammonia, methylamine and formamide. The chain is Aquaglyceroporin from Plasmodium falciparum (isolate 3D7).